Reading from the N-terminus, the 184-residue chain is ATP synthase subunit b, chloroplastic (184 aa).

Residues 27 to 49 (LATNPINLSVVLGVLIFFGKGVL) form a helical membrane-spanning segment.

Belongs to the ATPase B chain family. As to quaternary structure, F-type ATPases have 2 components, F(1) - the catalytic core - and F(0) - the membrane proton channel. F(1) has five subunits: alpha(3), beta(3), gamma(1), delta(1), epsilon(1). F(0) has four main subunits: a(1), b(1), b'(1) and c(10-14). The alpha and beta chains form an alternating ring which encloses part of the gamma chain. F(1) is attached to F(0) by a central stalk formed by the gamma and epsilon chains, while a peripheral stalk is formed by the delta, b and b' chains.

The protein resides in the plastid. The protein localises to the chloroplast thylakoid membrane. In terms of biological role, f(1)F(0) ATP synthase produces ATP from ADP in the presence of a proton or sodium gradient. F-type ATPases consist of two structural domains, F(1) containing the extramembraneous catalytic core and F(0) containing the membrane proton channel, linked together by a central stalk and a peripheral stalk. During catalysis, ATP synthesis in the catalytic domain of F(1) is coupled via a rotary mechanism of the central stalk subunits to proton translocation. Functionally, component of the F(0) channel, it forms part of the peripheral stalk, linking F(1) to F(0). This is ATP synthase subunit b, chloroplastic from Buxus microphylla (Littleleaf boxwood).